Reading from the N-terminus, the 112-residue chain is ATP synthase epsilon chain (112 aa).

Belongs to the ATPase epsilon chain family. As to quaternary structure, F-type ATPases have 2 components, CF(1) - the catalytic core - and CF(0) - the membrane proton channel. CF(1) has five subunits: alpha(3), beta(3), gamma(1), delta(1), epsilon(1). CF(0) has three main subunits: a, b and c.

It localises to the cell inner membrane. Functionally, produces ATP from ADP in the presence of a proton gradient across the membrane. The polypeptide is ATP synthase epsilon chain (Rickettsia peacockii (strain Rustic)).